The primary structure comprises 61 residues: MARKAIIEKWSKTPKYKTRAYTRCRICGRPHAVLKKYGVCRICFRELAYKGEIPGCRKASW.

Zn(2+) is bound by residues Cys-24, Cys-27, Cys-40, and Cys-43.

It belongs to the universal ribosomal protein uS14 family. Zinc-binding uS14 subfamily. As to quaternary structure, part of the 30S ribosomal subunit. Contacts proteins S3 and S10. The cofactor is Zn(2+).

Its function is as follows. Binds 16S rRNA, required for the assembly of 30S particles and may also be responsible for determining the conformation of the 16S rRNA at the A site. In Clostridium beijerinckii (strain ATCC 51743 / NCIMB 8052) (Clostridium acetobutylicum), this protein is Small ribosomal subunit protein uS14.